An 871-amino-acid polypeptide reads, in one-letter code: Pentatricopeptide repeat-containing protein At3g06920 (871 aa).

21 PPR repeats span residues 97–131 (CPES…GFGP), 132–166 (SVNT…KFRP), 167–201 (AFSA…GYEP), 202–236 (TVHL…SLDA), 237–271 (DIVL…GLKP), 272–306 (DEVT…RRVP), 307–341 (CTYA…GSIP), 342–372 (SVIA…MKKD), 376–410 (NLST…GLFP), 411–445 (NVRT…VCTP), 446–480 (DEIT…DCRT), 481–515 (NSIV…NCSP), 516–550 (DLQL…RFVP), 551–585 (DARS…GCVL), 586–620 (DTRA…GFEP), 621–655 (TVVT…RIEL), 656–690 (NVVI…GLTP), 691–725 (NLYT…KCTP), 726–760 (NQVT…GMKP), 761–795 (STIS…GGVP), and 796–830 (DSAC…GLPI).

This sequence belongs to the PPR family. P subfamily.

The polypeptide is Pentatricopeptide repeat-containing protein At3g06920 (Arabidopsis thaliana (Mouse-ear cress)).